Reading from the N-terminus, the 259-residue chain is UPF0246 protein PSPTO_1244 (259 aa).

Belongs to the UPF0246 family.

This is UPF0246 protein PSPTO_1244 from Pseudomonas syringae pv. tomato (strain ATCC BAA-871 / DC3000).